Consider the following 690-residue polypeptide: Subtilisin-like protease 1 (690 aa).

The signal sequence occupies residues 1-25 (MMLNKKVVALCTLTLHLFCIFLCLG). Residues 26–219 (KEVRSEENGK…IESDKLVSAD (194 aa)) constitute a propeptide, inhibition peptide. The segment at 99–131 (EKNKNDNHNNNNNNNNISSSSSSSSNTFGEEKE) is disordered. Residues 106–124 (HNNNNNNNNISSSSSSSSN) show a composition bias toward low complexity. N-linked (GlcNAc...) asparagine glycosylation occurs at N114. Ca(2+)-binding residues include N147, T150, and P152. N173 carries N-linked (GlcNAc...) asparagine glycosylation. G207 lines the Ca(2+) pocket. N263 carries N-linked (GlcNAc...) asparagine glycosylation. Disordered stretches follow at residues 266–286 (HAATSKRKRHSTNERGYDTFS) and 305–334 (NNNNYYYSHSSNGHNSSSRNSSSSRSRPGK). Residues 305–330 (NNNNYYYSHSSNGHNSSSRNSSSSRS) are compositionally biased toward low complexity. N-linked (GlcNAc...) asparagine glycosylation is found at N319 and N324. Residue E340 coordinates Ca(2+). One can recognise a Peptidase S8 domain in the interval 345-663 (QWGLDLSRLD…AGYADINKAV (319 aa)). Intrachain disulfides connect C371/C481 and C460/C477. Catalysis depends on D374, which acts as the Charge relay system. Positions 383, 394, 398, 401, 402, 403, 404, 406, 408, 410, and 411 each coordinate Ca(2+). Residue N419 is glycosylated (N-linked (GlcNAc...) asparagine). The Charge relay system role is filled by H430. Positions 441, 444, 446, and 448 each coordinate Ca(2+). N490, N503, and N522 each carry an N-linked (GlcNAc...) asparagine glycan. C523 and C536 are joined by a disulfide. An N-linked (GlcNAc...) asparagine glycan is attached at N605. Catalysis depends on S608, which acts as the Charge relay system. An N-linked (GlcNAc...) asparagine glycan is attached at N677.

The protein belongs to the peptidase S8 family. Heterodimer between p54 form and prodomain p31; the interaction inhibits p54 catalytic activity. Heterodimer p31-p54 is monomeric at basic pH and dimeric at acidic pH; dimerization is driven by the N-terminal prodomain (p31). Requires Ca(2+) as cofactor. The prodomain (p31) is cleaved, probably by autocatalysis, during the transport to or in the Golgi apparatus, and remains non-covalently associated with the p54 form as an inhibitor. p54 is further cleaved into the p47 form. This cleavage is likely occurring in the exoneme prior to egress and is mediated by PMX/plasmepsin X. The p54-to-p47 conversion can be also autocatalytic. Heterodimer p31-p54 is activated by cleavage of prodomain (p31) by the aspartic protease PMX; cleavage by PMX abolishes inhibitory capacity of p31. Primary autocatalytic processing of SUB1 is essential for parasite growth; the p54-to-p47 conversion is dispensable for SUB1 functions in the parasites. Post-translationally, the disulfide bond between Cys-523 and Cys-536 acts as a redox-sensitive disulfide switch. The oxidized form is required for catalytic activity. In terms of processing, the relevance of N-glycosylation is not clear. In an insect expression system, SUB1 glycosylation appears to affect its processing into the active mature form suggesting that SUB1 may not be N-glycosylated in parasites.

It localises to the secreted. The protein localises to the parasitophorous vacuole lumen. The enzyme catalyses Hydrolysis of proteins with broad specificity for peptide bonds, and a preference for a large uncharged residue in P1. Hydrolyzes peptide amides.. P54 and probably p47 forms are inhibited by the non-covalent interaction with the cleaved propeptide. Inhibited by subtilisin propeptide-like protein SUB1-ProM. Inhibited by 3,4-dichloroisocoumarin (DCI) and 4-(hydroxymercuri)benzoic acid (pHMB). Partially inhibited by chymostatin, leupeptin, phenylmethylsulfonyl fluoride (PMSF), and 4-(2-aminoethyl)benzenesulfonyl fluoride. Functionally, serine protease which plays an essential role in merozoite invasion of and egress from host erythrocytes by processing and activating various merozoite surface and parasitophorous vacuole proteins. Mediates the proteolytic maturation of serine proteases SERA4, SERA5 and SERA6 just prior to merozoite egress. Prior to merozoite egress, cleaves merozoite surface proteins MSP1, MSP6 and MSP7, which form the MSP1/6/7 complex, and thereby may prime the parasite cell surface for invasion of fresh erythrocytes. Prior to merozoite egress, cleaves MSRP2 converting it to MSRP2 p25 form, and RAP1 converting it to RAP1 p67 form. In Plasmodium falciparum, this protein is Subtilisin-like protease 1.